We begin with the raw amino-acid sequence, 90 residues long: DNA-binding protein HU-beta (90 aa).

Belongs to the bacterial histone-like protein family. As to quaternary structure, heterodimer of an alpha and a beta chain.

Its function is as follows. Histone-like DNA-binding protein which is capable of wrapping DNA to stabilize it, and thus to prevent its denaturation under extreme environmental conditions. The polypeptide is DNA-binding protein HU-beta (hupB) (Serratia marcescens).